A 323-amino-acid polypeptide reads, in one-letter code: 1D-myo-inositol 2-acetamido-2-deoxy-alpha-D-glucopyranoside deacetylase (323 aa).

3 residues coordinate Zn(2+): H28, D31, and H163.

Belongs to the MshB deacetylase family. Zn(2+) is required as a cofactor.

It catalyses the reaction 1D-myo-inositol 2-acetamido-2-deoxy-alpha-D-glucopyranoside + H2O = 1D-myo-inositol 2-amino-2-deoxy-alpha-D-glucopyranoside + acetate. Its function is as follows. Catalyzes the deacetylation of 1D-myo-inositol 2-acetamido-2-deoxy-alpha-D-glucopyranoside (GlcNAc-Ins) in the mycothiol biosynthesis pathway. This chain is 1D-myo-inositol 2-acetamido-2-deoxy-alpha-D-glucopyranoside deacetylase, found in Streptomyces scabiei (strain 87.22).